Reading from the N-terminus, the 179-residue chain is Translation initiation factor IF-3 (179 aa).

It belongs to the IF-3 family. In terms of assembly, monomer.

The protein localises to the cytoplasm. Functionally, IF-3 binds to the 30S ribosomal subunit and shifts the equilibrium between 70S ribosomes and their 50S and 30S subunits in favor of the free subunits, thus enhancing the availability of 30S subunits on which protein synthesis initiation begins. The protein is Translation initiation factor IF-3 of Buchnera aphidicola subsp. Acyrthosiphon pisum (strain 5A).